The chain runs to 747 residues: Tripartite terminase subunit 3 (747 aa).

A Nuclear localization signal motif is present at residues K194 to V198. The Walker A motif signature appears at V267–T274. The short motif at L361–E366 is the Walker B motif element. E366 acts as the For ATPase activity in catalysis. Residues D521, E593, and D722 each act as for nuclease activity in the active site.

The protein belongs to the herpesviridae TRM3 protein family. In terms of assembly, interacts with the terminase subunits TRM1 and TRM2. Interacts with portal protein.

It localises to the host nucleus. Component of the molecular motor that translocates viral genomic DNA in empty capsid during DNA packaging. Forms a tripartite terminase complex together with TRM1 and TRM2 in the host cytoplasm. Once the complex reaches the host nucleus, it interacts with the capsid portal vertex. This portal forms a ring in which genomic DNA is translocated into the capsid. TRM3 carries an RNase H-like nuclease activity that plays an important role for the cleavage of concatemeric viral DNA into unit length genomes. In Homo sapiens (Human), this protein is Tripartite terminase subunit 3.